The sequence spans 187 residues: Protein TIFY 3B (187 aa).

Basic and acidic residues predominate over residues 1–10; the sequence is MTKVKDEPRA. The tract at residues 1 to 50 is disordered; it reads MTKVKDEPRASVEGGCGVADGDGGAAEIGGTGSVEKSINEVRSTEIQTAE. Positions 14–32 are enriched in gly residues; it reads GGCGVADGDGGAAEIGGTG. The 36-residue stretch at 51–86 folds into the Tify domain; it reads PTVPPNQLTIFFGGSVTVFDGLPSEKVQEILRIAAK. The Jas signature appears at 139 to 163; it reads PIARRHSLQRFLEKRRDRLVNKNPY. The short motif at 141 to 148 is the Nuclear localization signal element; sequence ARRHSLQR. Residues 152 to 187 form a disordered region; that stretch reads KRRDRLVNKNPYPTSDFKKTDVPTGNVSIKEEFPTA.

It belongs to the TIFY/JAZ family. In terms of assembly, interacts with MYC2, AFPH2/NINJA, TIFY10A/JAZ1, TIFY10B/JAZ2, TIFY11A/JAZ5, TIFY11B/JAZ6, TIFY5A/JAZ8 and TIFY9/JAZ10. (Microbial infection) Interacts with the pathogenic Pseudomonas syringae HopZ1a protein. In terms of processing, (Microbial infection) Acetylated by Pseudomonas syringae HopZ1a. Post-translationally, ubiquitinated. Targeted for degradation by the SCF(COI1) E3 ubiquitin ligase-proteasome pathway during jasmonate signaling.

The protein localises to the nucleus. In terms of biological role, repressor of jasmonate responses. The chain is Protein TIFY 3B from Arabidopsis thaliana (Mouse-ear cress).